The chain runs to 256 residues: Aspirochlorine biosynthesis protein F (256 aa).

Asparagine 19 is a glycosylation site (N-linked (GlcNAc...) asparagine). The next 3 helical transmembrane spans lie at 21–41 (SITP…GPHF), 163–183 (LVWV…FFFT), and 214–234 (FGLG…ILAV).

Its subcellular location is the membrane. It functions in the pathway mycotoxin biosynthesis. Part of the gene cluster that mediates the biosynthesis of aspirochlorine (or antibiotic A30641), an unusual halogenated spiro compound with distinctive antifungal properties due to selective inhibition of protein biosynthesis, and which is also active against bacteria, viruses, and murine tumor cells. The non-ribosomal peptide synthetase (NRPS) aclP is responsible the formation of the diketopiperazine (DKP) core from the condensation of 2 phenylalanine residues. One Phe residue is tailored into chlorotyrosine by hydroxylation and chlorination, whereas the second Phe undergoes an unprecedented C-C bond cleavage to be converted into glycine. After formation of the DKP, sulfur is incorporated into the DKP by conjugation with glutathione by aclG, followed by its stepwise degradation to the thiol by aclI, aclJ and aclK, and the dithiol oxidation by aclT. In addition, oxygenases (aclB, aclC, aclL and aclO) and O-methyltransferases (aclM and aclU) act as tailoring enzymes to produce the intermediate dechloroaspirochlorine. Ultimately, chlorination of dechloroaspirochlorine by the halogenase aclH is the last step in the aspirochlorine pathway. In Aspergillus oryzae (strain ATCC 42149 / RIB 40) (Yellow koji mold), this protein is Aspirochlorine biosynthesis protein F.